The chain runs to 201 residues: Type III effector protein HopBF1 (201 aa).

Residues Ser-39, Gln-40, Lys-41, Asp-106, Ile-108, and Asp-113 each contribute to the ATP site. Residue Asp-154 is part of the active site. Gln-156 contributes to the ATP binding site.

Belongs to the HopBF1 family.

The protein resides in the secreted. The protein localises to the host cell. It catalyses the reaction L-seryl-[protein] + ATP = O-phospho-L-seryl-[protein] + ADP + H(+). Functionally, effector protein that targets and inactivates the plant molecular chaperone HSP90 during infection. HopBF1 is recognized by HSP90 as a host client. As a result, HopBF1 phosphorylates HSP90, leading to the inactivation of the HSP90 ATPase activity and chaperone function. Phosphorylation of HSP90 prevents activation of immune receptors that trigger the hypersensitive response in plants. HopBF1 is sufficient to cause severe disease symptoms in plants infected with P.syringae. In vitro, can phosphorylate the recombinant yeast HSP82 (HSP90) on Ser-99, Triticum aestivum (wheat) HSP90 and human HSP 90-beta, but not the prokaryotic HSP90 orthologs, HtpG from E.coli and P.syringae. Does not act on generic protein kinase substrates such as casein and myelin basic protein, as well as the yeast HSP70s and Bip chaperones. The protein is Type III effector protein HopBF1 of Pseudomonas syringae pv. syringae (strain FF5).